The chain runs to 161 residues: Troponin C, slow skeletal and cardiac muscles (161 aa).

N-acetylmethionine is present on Met1. EF-hand domains are found at residues 16–51, 52–87, 92–127, and 128–161; these read QKNE…LGQN, PTPE…CMKD, KTEE…TGET, and ITED…KGVE. Ca(2+) is bound by residues Asp65, Asp67, Ser69, Thr71, Glu76, Asp105, Asn107, Asp109, Tyr111, Glu116, Asp141, Asn143, Asp145, Arg147, and Glu152.

Belongs to the troponin C family.

Functionally, troponin is the central regulatory protein of striated muscle contraction. Tn consists of three components: Tn-I which is the inhibitor of actomyosin ATPase, Tn-T which contains the binding site for tropomyosin and Tn-C. The binding of calcium to Tn-C abolishes the inhibitory action of Tn on actin filaments. The sequence is that of Troponin C, slow skeletal and cardiac muscles (TNNC1) from Gallus gallus (Chicken).